We begin with the raw amino-acid sequence, 253 residues long: Large ribosomal subunit protein uL10m (253 aa).

Residues M1–F24 constitute a mitochondrion transit peptide.

The protein belongs to the universal ribosomal protein uL10 family. In terms of assembly, component of the mitochondrial ribosome large subunit (39S) which comprises a 16S rRNA and about 50 distinct proteins.

The protein resides in the mitochondrion. This is Large ribosomal subunit protein uL10m (mRpL10) from Drosophila pseudoobscura pseudoobscura (Fruit fly).